The sequence spans 233 residues: Large ribosomal subunit protein uL1 (233 aa).

It belongs to the universal ribosomal protein uL1 family. Part of the 50S ribosomal subunit.

Functionally, binds directly to 23S rRNA. The L1 stalk is quite mobile in the ribosome, and is involved in E site tRNA release. Protein L1 is also a translational repressor protein, it controls the translation of the L11 operon by binding to its mRNA. This Zymomonas mobilis subsp. mobilis (strain ATCC 31821 / ZM4 / CP4) protein is Large ribosomal subunit protein uL1.